The following is an 832-amino-acid chain: MPLSCPHFRKLLLLDEEAGPLEEELPRLADEGLNRRVAEDLNLQLPNVSIPWTHKVGNFTGLYSSTVPVFNPKWQTPSFPDIHLHQDIINKCEQFVGPLTVNEKRRLKLIIAARFYPNAPKYLPLDKGIKPYYPEHVVNHYFQTRHYLHILWKAGILYKRETTRSASFCGSPYSWEQELQHGAEPVCQQSLGILPRASVGSPVQSQLKQSRLGLQSQQRQLARSHQGRSGSIRARVHSTTRRSFRVELSGSGSNHNIASTSSSCRHQSAVRETAYSHLSTVERHSSSGHEVELYSIPPNSARSQSTGPILSCWWLQFRNSEPCSDYCLSHLVNLLEDWGPCTEHGEHHIRIPRTPARVTGGVFLVDKNPHNTTESRLVVDFSQFSRGSTRVSWPKFAVPNLQSLTNLLSSNLSWLSLDVSAAFYHLPLHPAAMPHLLVGSSGLSRYVARLSSTSRIIDHQHGTMQNLHDHCSRNLFVSLMLLYKTFGRKLHLYSHPIVLGFRKIPMGVGLSPFLLAQFTSSICSVVRRAFPHCLAFSYMDDLVLGAKSVQHLESIYTAVTNFLLSLGIHLNPNKTKRWGYSLNFMGYIIGSWGSLPQDHIVQKIKQCFRKLPVNRPIDWKVCQRIVGLLGFAAPFTQCGYPALMPLYACIQAKQAFTFSPTYKAFLRTQYLTLYPVARQRPGLCQVFADATPTGWGLAIGHQRMRGTFVAPLPIHTAELLAACFARSRSGANIIGTDNSVVLSPKYTSFPWLLGCAANWILRRTSFVYVPSALNPADDPSRGRLGLYRPLLRPWFRPTTGRTSLYAVSPSVPSHLPVRVHFASPLHVAWRPP.

The tract at residues 1-177 is terminal protein domain (TP); sequence MPLSCPHFRK…FCGSPYSWEQ (177 aa). A spacer region spans residues 178–335; that stretch reads ELQHGAEPVC…YCLSHLVNLL (158 aa). Over residues 208–224 the composition is skewed to low complexity; sequence KQSRLGLQSQQRQLARS. Positions 208 to 241 are disordered; that stretch reads KQSRLGLQSQQRQLARSHQGRSGSIRARVHSTTR. The segment at 336 to 679 is polymerase/reverse transcriptase domain (RT); the sequence is EDWGPCTEHG…YLTLYPVARQ (344 aa). Residues 346-589 form the Reverse transcriptase domain; that stretch reads EHHIRIPRTP…YSLNFMGYII (244 aa). Aspartate 418, aspartate 540, and aspartate 541 together coordinate Mg(2+).

Belongs to the hepadnaviridae P protein family.

It catalyses the reaction DNA(n) + a 2'-deoxyribonucleoside 5'-triphosphate = DNA(n+1) + diphosphate. The enzyme catalyses Endonucleolytic cleavage to 5'-phosphomonoester.. Its activity is regulated as follows. Activated by host HSP70 and HSP40 in vitro to be able to bind the epsilon loop of the pgRNA. Because deletion of the RNase H region renders the protein partly chaperone-independent, the chaperones may be needed indirectly to relieve occlusion of the RNA-binding site by this domain. Inhibited by several reverse-transcriptase inhibitors: Lamivudine, Adefovir and Entecavir. In terms of biological role, multifunctional enzyme that converts the viral RNA genome into dsDNA in viral cytoplasmic capsids. This enzyme displays a DNA polymerase activity that can copy either DNA or RNA templates, and a ribonuclease H (RNase H) activity that cleaves the RNA strand of RNA-DNA heteroduplexes in a partially processive 3'- to 5'-endonucleasic mode. Neo-synthesized pregenomic RNA (pgRNA) are encapsidated together with the P protein, and reverse-transcribed inside the nucleocapsid. Initiation of reverse-transcription occurs first by binding the epsilon loop on the pgRNA genome, and is initiated by protein priming, thereby the 5'-end of (-)DNA is covalently linked to P protein. Partial (+)DNA is synthesized from the (-)DNA template and generates the relaxed circular DNA (RC-DNA) genome. After budding and infection, the RC-DNA migrates in the nucleus, and is converted into a plasmid-like covalently closed circular DNA (cccDNA). The activity of P protein does not seem to be necessary for cccDNA generation, and is presumably released from (+)DNA by host nuclear DNA repair machinery. The chain is Protein P from Gibbon hepatitis B virus subtype ayw3q (isolate Hope) (HBVgbn).